The following is a 101-amino-acid chain: Small ribosomal subunit protein uS14 (101 aa).

Belongs to the universal ribosomal protein uS14 family. As to quaternary structure, part of the 30S ribosomal subunit. Contacts proteins S3 and S10.

Functionally, binds 16S rRNA, required for the assembly of 30S particles and may also be responsible for determining the conformation of the 16S rRNA at the A site. The protein is Small ribosomal subunit protein uS14 of Vesicomyosocius okutanii subsp. Calyptogena okutanii (strain HA).